The chain runs to 398 residues: Mitochondrial protein import protein mas5 (398 aa).

The region spanning Gly7–Met88 is the J domain. The CR-type zinc finger occupies Gly139–Lys219. Phe144–Val146 is a substrate binding site. Residues Cys152, Cys155, Cys166, Cys169, Cys192, Cys195, Cys207, and Cys210 each contribute to the Zn(2+) site. 4 CXXCXGXG motif repeats span residues Cys152–Gly159, Cys166–Gly173, Cys192–Gly199, and Cys207–Glu214. Substrate is bound by residues Met221–Phe222 and Val253–Phe255. The disordered stretch occupies residues Phe367–Gln386.

This sequence belongs to the DnaJ family. As to quaternary structure, homodimer. The cofactor is Zn(2+).

It is found in the cytoplasm. Probably involved in mitosomal protein import. The polypeptide is Mitochondrial protein import protein mas5 (MAS5) (Encephalitozoon cuniculi (strain GB-M1) (Microsporidian parasite)).